The following is a 1108-amino-acid chain: MLRGQSLPWRAALHQTPRPTVLRPLLPFARNNGPVRSNLSISRLSRSPSLSPRAFSTSSIRRKEKPPSDEKEDSNLQEQKDPNEQKDSDRSPEGRRRSPDSTGREPGAPTSASGRRRDKVAGEKEQRGVEEDAKKENVSIEGKSDPTEDPSPIPVNGGGSSDTKSSASNGGNEDGGRKGKKGSGDRALQKPSVPEVYPQVMAIPIAKRPLFPGFYKAITIRDPNVATAIQEMMKRGQPYVGAFLFKDENADGDVIENLDDVYDVGVFAQITAAYPLRGEASGVTAVLYPHRRIKISSLLPPGEQSKAGNTEDKAPEKKGDVVASFEEGVAEPAPKDLYEPTSFLRKYPVSLVNVENLAEEPFDKKSAIIRAVTSEIVNVCKEIASLNPLFRDQISAFYTDQFPGNLSDEPAKLADFAAAVSAGELHEMQEVLEIMNIEERLPKALVVLKKELMNAQLQSKISKDVEAKIQKRQREYWLMEQMKGIKRELGIESDGKDKLVEKFKEKASKLAMPDAVKKVFDEEINKLAHLEPAASEFNVTRNYLDWLTQIPWGQKSVENFGIKHAMTVLDEDHYGLKDVKDRILEFIAVGKLRGTVEGKILCLVGPPGVGKTSIGKSIARALNRQYYRFSVGGLTDVAEIKGHRRTYVGALPGRIIQALKKCQTENPLILIDEVDKIGRGHQGDPSSALLELLDPEQNSSFLDHYMDVPVDLSKVLFVCTANVTDTIPRPLLDRMELIELSGYVADEKMAIAERYLAPAARELTGLKDVDVNLQKDAIEELIKSYARESGVRNLKKQIEKVYRKAAFKIVQDLGEEVLGEDKALTDEGKAAQEESKKETEEGDPKDPPADPEKSTTETPRLALKVPESVHLSIGKDSLTDYLGPPVFTADRLYDTFPPGVTMGLAWTSMGGAALYVESILENALTPESRPGIDITGNLQPVMKESTQIAYSFAKSVLAKQFPENKFFEKAKLHMHCPEGAVPKDGPSAGITMATSLLSLALDHPLDPTIAMTGELTVTGKVLRIGGLREKTVAARRAGAKKIIFPADNMSDWLELPENIKDGIEGHAVSWYSEVFNILFAELDKDAANKLWQKQLAGKPKKGPLEEDD.

Residues 1–62 constitute a mitochondrion transit peptide; the sequence is MLRGQSLPWR…RAFSTSSIRR (62 aa). Disordered regions lie at residues 24-192 and 299-318; these read PLLP…QKPS and LPPG…PEKK. The span at 36 to 53 shows a compositional bias: low complexity; that stretch reads RSNLSISRLSRSPSLSPR. Basic and acidic residues-rich tracts occupy residues 78–103 and 119–146; these read EQKD…DSTG and KVAG…KSDP. Positions 161–171 are enriched in polar residues; that stretch reads SDTKSSASNGG. 2 stretches are compositionally biased toward basic and acidic residues: residues 174 to 188 and 309 to 318; these read DGGR…DRAL and NTEDKAPEKK. The 253-residue stretch at 200–452 folds into the Lon N-terminal domain; sequence VMAIPIAKRP…KALVVLKKEL (253 aa). An ATP-binding site is contributed by 605 to 612; sequence GPPGVGKT. Basic and acidic residues predominate over residues 821–855; the sequence is DKALTDEGKAAQEESKKETEEGDPKDPPADPEKST. Residues 821–862 are disordered; it reads DKALTDEGKAAQEESKKETEEGDPKDPPADPEKSTTETPRLA. Residues 895–1081 form the Lon proteolytic domain; the sequence is TFPPGVTMGL…SEVFNILFAE (187 aa). Catalysis depends on residues S987 and K1030.

It belongs to the peptidase S16 family. In terms of assembly, homohexamer or homoheptamer. Organized in a ring with a central cavity.

It localises to the mitochondrion matrix. It carries out the reaction Hydrolysis of proteins in presence of ATP.. ATP-dependent serine protease that mediates the selective degradation of misfolded, unassembled or oxidatively damaged polypeptides as well as certain short-lived regulatory proteins in the mitochondrial matrix. May also have a chaperone function in the assembly of inner membrane protein complexes. Participates in the regulation of mitochondrial gene expression and in the maintenance of the integrity of the mitochondrial genome. Binds to mitochondrial DNA in a site-specific manner. This Aspergillus fumigatus (strain ATCC MYA-4609 / CBS 101355 / FGSC A1100 / Af293) (Neosartorya fumigata) protein is Lon protease homolog, mitochondrial (pim1).